A 151-amino-acid polypeptide reads, in one-letter code: Arginine repressor (151 aa).

It belongs to the ArgR family.

The protein resides in the cytoplasm. The protein operates within amino-acid biosynthesis; L-arginine biosynthesis [regulation]. Functionally, regulates arginine biosynthesis genes. The polypeptide is Arginine repressor (Lachnospira eligens (strain ATCC 27750 / DSM 3376 / VPI C15-48 / C15-B4) (Eubacterium eligens)).